Consider the following 352-residue polypeptide: Protein MGF 360-16R (352 aa).

This sequence belongs to the asfivirus MGF 360 family.

In terms of biological role, plays a role in virus cell tropism, and may be required for efficient virus replication in macrophages. The sequence is that of Protein MGF 360-16R from African swine fever virus (isolate Warthog/Namibia/Wart80/1980) (ASFV).